Consider the following 170-residue polypeptide: Peptide deformylase 2 (170 aa).

Fe cation is bound by residues cysteine 94 and histidine 136. Glutamate 137 is an active-site residue. Histidine 140 contributes to the Fe cation binding site.

Belongs to the polypeptide deformylase family. Fe(2+) is required as a cofactor.

The enzyme catalyses N-terminal N-formyl-L-methionyl-[peptide] + H2O = N-terminal L-methionyl-[peptide] + formate. Removes the formyl group from the N-terminal Met of newly synthesized proteins. Requires at least a dipeptide for an efficient rate of reaction. N-terminal L-methionine is a prerequisite for activity but the enzyme has broad specificity at other positions. The protein is Peptide deformylase 2 of Xanthomonas axonopodis pv. citri (strain 306).